Reading from the N-terminus, the 361-residue chain is Phosphoserine aminotransferase (361 aa).

L-glutamate is bound at residue R42. Residues A76–R77, W102, T153, D173, and Q196 each bind pyridoxal 5'-phosphate. K197 carries the post-translational modification N6-(pyridoxal phosphate)lysine. A pyridoxal 5'-phosphate-binding site is contributed by N238–T239.

The protein belongs to the class-V pyridoxal-phosphate-dependent aminotransferase family. SerC subfamily. Homodimer. The cofactor is pyridoxal 5'-phosphate.

It localises to the cytoplasm. The enzyme catalyses O-phospho-L-serine + 2-oxoglutarate = 3-phosphooxypyruvate + L-glutamate. It carries out the reaction 4-(phosphooxy)-L-threonine + 2-oxoglutarate = (R)-3-hydroxy-2-oxo-4-phosphooxybutanoate + L-glutamate. It participates in amino-acid biosynthesis; L-serine biosynthesis; L-serine from 3-phospho-D-glycerate: step 2/3. The protein operates within cofactor biosynthesis; pyridoxine 5'-phosphate biosynthesis; pyridoxine 5'-phosphate from D-erythrose 4-phosphate: step 3/5. Catalyzes the reversible conversion of 3-phosphohydroxypyruvate to phosphoserine and of 3-hydroxy-2-oxo-4-phosphonooxybutanoate to phosphohydroxythreonine. This is Phosphoserine aminotransferase from Pectobacterium carotovorum subsp. carotovorum (strain PC1).